The chain runs to 558 residues: Laccase-4 (558 aa).

Positions 1–24 are cleaved as a signal peptide; it reads MGSHMVWFLFLVSFFSVFPAPSES. Plastocyanin-like domains follow at residues 32–148 and 158–308; these read NVVM…PKRG and NEKV…YSGT. N-linked (GlcNAc...) asparagine glycosylation is found at Asn-37 and Asn-78. Residues His-82 and His-84 each contribute to the Cu cation site. The N-linked (GlcNAc...) asparagine glycan is linked to Asn-114. His-127 and His-129 together coordinate Cu cation. N-linked (GlcNAc...) asparagine glycans are attached at residues Asn-187, Asn-296, Asn-323, Asn-330, Asn-373, Asn-383, Asn-400, Asn-418, and Asn-441. Residues 408 to 542 enclose the Plastocyanin-like 3 domain; sequence DFPKNPPHVF…KMAFLVENGK (135 aa). Positions 459, 462, and 464 each coordinate Cu cation. An N-linked (GlcNAc...) asparagine glycan is attached at Asn-479. Cu cation contacts are provided by His-521, Cys-522, His-523, and His-527. The N-linked (GlcNAc...) asparagine glycan is linked to Asn-545.

It belongs to the multicopper oxidase family. It depends on Cu cation as a cofactor. Ubiquitous, with higher levels in the inflorescence stem.

It localises to the secreted. It is found in the extracellular space. The protein localises to the apoplast. The catalysed reaction is 4 hydroquinone + O2 = 4 benzosemiquinone + 2 H2O. Its function is as follows. Lignin degradation and detoxification of lignin-derived products. Required for secondary xylem cell wall lignification. The polypeptide is Laccase-4 (IRX12) (Arabidopsis thaliana (Mouse-ear cress)).